Consider the following 1523-residue polypeptide: Lysophospholipase nte1 (1523 aa).

Residues 1 to 66 (MADGVTLVDS…LPPVPTTMAG (66 aa)) are Cytoplasmic-facing. The chain crosses the membrane as a helical span at residues 67-87 (WIGWVFSFFFQVIPSVLYWVI). The Lumenal portion of the chain corresponds to 88 to 109 (TFSTITLPTWLFTLFSMSLTFT). A helical transmembrane segment spans residues 110–130 (MNFTTLLLIVLAMVSTISWFI). Topologically, residues 131 to 1523 (RYRFLNMYSR…RTMAPRRASI (1393 aa)) are cytoplasmic. Disordered stretches follow at residues 309-384 (VPNS…KSVH) and 524-545 (RAAT…GVSP). Residues 370 to 382 (ESRKHSSRKRRKS) are compositionally biased toward basic residues. A nucleoside 3',5'-cyclic phosphate-binding positions include 681 to 800 (GGTS…GAVA) and 841 to 961 (RLTS…IAQR). Residues 1220-1384 (LVLGGGGARG…IDNLTVDHMK (165 aa)) form the PNPLA domain. Positions 1224-1229 (GGGARG) match the GXGXXG motif. The short motif at 1251-1255 (GTSIG) is the GXSXG element. The active-site Nucleophile is serine 1253. Aspartate 1371 (proton acceptor) is an active-site residue. A DGA/G motif is present at residues 1371 to 1373 (DGG). The disordered stretch occupies residues 1502 to 1523 (LPEETEEKKKLQRTMAPRRASI).

Belongs to the NTE family.

It localises to the endoplasmic reticulum membrane. It catalyses the reaction a 1-acyl-sn-glycero-3-phosphocholine + H2O = sn-glycerol 3-phosphocholine + a fatty acid + H(+). With respect to regulation, inhibited by organophosphorus esters. Its function is as follows. Intracellular phospholipase B that catalyzes the double deacylation of phosphatidylcholine (PC) to glycerophosphocholine (GroPCho). Plays an important role in membrane lipid homeostasis. Responsible for the rapid PC turnover in response to inositol, elevated temperatures, or when choline is present in the growth medium. The chain is Lysophospholipase nte1 (nte1) from Neosartorya fischeri (strain ATCC 1020 / DSM 3700 / CBS 544.65 / FGSC A1164 / JCM 1740 / NRRL 181 / WB 181) (Aspergillus fischerianus).